The sequence spans 796 residues: High affinity nerve growth factor receptor (796 aa).

An N-terminal signal peptide occupies residues 1–32 (MLRGGRRGQLGWHSWAAGPGSLLAWLILASAG). Residues 33–423 (AAPCPDACCP…TPFGVSVAVG (391 aa)) are Extracellular-facing. 2 cysteine pairs are disulfide-bonded: Cys-36/Cys-41 and Cys-40/Cys-50. N-linked (GlcNAc...) asparagine glycosylation is found at Asn-67, Asn-95, Asn-121, Asn-188, Asn-202, Asn-253, Asn-262, Asn-281, Asn-318, Asn-323, Asn-338, Asn-358, and Asn-401. LRR repeat units follow at residues 90–113 (LGEL…AFHF) and 116–137 (RLSR…TVQG). The region spanning 148–193 (NPLHCSCALRWLQRWEEEGLGGVPEQKLQCHGQGPLAHMPNASCGV) is the LRRCT domain. A disulfide bond links Cys-154 and Cys-191. 2 consecutive Ig-like C2-type domains span residues 194-283 (PTLK…VNVS) and 299-365 (WCIP…LAAN). Cys-215 and Cys-265 form a disulfide bridge. A disulfide bond links Cys-300 and Cys-345. The chain crosses the membrane as a helical span at residues 424 to 439 (LAVFACLFLSTLLLVL). Topologically, residues 440-796 (NKCGRRNKFG…APPVYLDVLG (357 aa)) are cytoplasmic. The segment at 469–490 (MTLGGSSLSPTEGKGSGLQGHI) is interaction with SQSTM1. A Phosphotyrosine; by autocatalysis modification is found at Tyr-496. The 272-residue stretch at 510–781 (IVLKWELGEG…HSIKDVHARL (272 aa)) folds into the Protein kinase domain. 516–524 (LGEGAFGKV) contacts ATP. Positions 537-541 (DKMLV) match the DXXLL motif. Residue Lys-544 participates in ATP binding. The DXXLL motif lies at 607 to 611 (DAKLL). Residue Asp-650 is the Proton acceptor of the active site. Phosphotyrosine; by autocatalysis occurs at positions 676, 680, 681, and 791.

It belongs to the protein kinase superfamily. Tyr protein kinase family. Insulin receptor subfamily. In terms of assembly, exists in a dynamic equilibrium between monomeric (low affinity) and dimeric (high affinity) structures. Homodimerization is induced by binding of a NGF dimer. Interacts with SQSTM1; bridges NTRK1 to NGFR. Forms a ternary complex with NGFR and KIDINS220; this complex is affected by the expression levels of KIDINS220 and an increase in KIDINS220 expression leads to a decreased association of NGFR and NTRK1. Interacts with SH2D1A; regulates NTRK1. Interacts (phosphorylated upon activation by NGF) with SHC1; mediates SHC1 phosphorylation and activation. Interacts (phosphorylated upon activation by NGF) with PLCG1; mediates PLCG1 phosphorylation and activation. Interacts (phosphorylated) with SH2B1 and SH2B2. Interacts with GRB2. Interacts with PIK3R1. Interacts with FRS2. Interacts with SORT1; may regulate NTRK1 anterograde axonal transport. Interacts with RAB7A. Found in a complex, at least composed of KIDINS220, MAGI2, NTRK1 and RAPGEF2; the complex is mainly formed at late endosomes in a nerve growth factor (NGF)-dependent manner. Interacts with RAPGEF2; the interaction is strengthened after NGF stimulation. Interacts with PTPRS. Interacts with USP36; USP36 does not deubiquitinate NTRK1. Interacts with GGA3. Interacts with TSPAN1; this interaction promotes NTRK1 stability. Post-translationally, ligand-mediated autophosphorylation. Interaction with SQSTM1 is phosphotyrosine-dependent. Autophosphorylation at Tyr-496 mediates interaction and phosphorylation of SHC1. N-glycosylated. Isoform TrkA-I and isoform TrkA-II are N-glycosylated. In terms of processing, ubiquitinated. Undergoes polyubiquitination upon activation; regulated by NGFR. Ubiquitination by NEDD4L leads to degradation. Ubiquitination regulates the internalization of the receptor. In terms of tissue distribution, isoform TrkA-I is found in most non-neuronal tissues. Isoform TrkA-II is primarily expressed in neuronal cells. TrkA-III is specifically expressed by pluripotent neural stem and neural crest progenitors.

Its subcellular location is the cell membrane. The protein resides in the early endosome membrane. It is found in the late endosome membrane. The protein localises to the recycling endosome membrane. It catalyses the reaction L-tyrosyl-[protein] + ATP = O-phospho-L-tyrosyl-[protein] + ADP + H(+). With respect to regulation, the pro-survival signaling effect of NTRK1 in neurons requires its endocytosis into signaling early endosomes and its retrograde axonal transport. This is regulated by different proteins including CFL1, RAC1 and SORT1. NTF3 is unable to induce this signaling probably due to the lability of the NTF3-NTRK1 complex in endosomes. SH2D1A inhibits the autophosphorylation of the receptor, and alters the recruitment and activation of downstream effectors and signaling cascades. Regulated by NGFR. Its function is as follows. Receptor tyrosine kinase involved in the development and the maturation of the central and peripheral nervous systems through regulation of proliferation, differentiation and survival of sympathetic and nervous neurons. High affinity receptor for NGF which is its primary ligand. Can also bind and be activated by NTF3/neurotrophin-3. However, NTF3 only supports axonal extension through NTRK1 but has no effect on neuron survival. Upon dimeric NGF ligand-binding, undergoes homodimerization, autophosphorylation and activation. Recruits, phosphorylates and/or activates several downstream effectors including SHC1, FRS2, SH2B1, SH2B2 and PLCG1 that regulate distinct overlapping signaling cascades driving cell survival and differentiation. Through SHC1 and FRS2 activates a GRB2-Ras-MAPK cascade that regulates cell differentiation and survival. Through PLCG1 controls NF-Kappa-B activation and the transcription of genes involved in cell survival. Through SHC1 and SH2B1 controls a Ras-PI3 kinase-AKT1 signaling cascade that is also regulating survival. In absence of ligand and activation, may promote cell death, making the survival of neurons dependent on trophic factors. Functionally, resistant to NGF, it constitutively activates AKT1 and NF-kappa-B and is unable to activate the Ras-MAPK signaling cascade. Antagonizes the anti-proliferative NGF-NTRK1 signaling that promotes neuronal precursors differentiation. Isoform TrkA-III promotes angiogenesis and has oncogenic activity when overexpressed. The chain is High affinity nerve growth factor receptor (NTRK1) from Homo sapiens (Human).